Reading from the N-terminus, the 51-residue chain is Large ribosomal subunit protein bL33 (51 aa).

Belongs to the bacterial ribosomal protein bL33 family.

The sequence is that of Large ribosomal subunit protein bL33 from Nitrosospira multiformis (strain ATCC 25196 / NCIMB 11849 / C 71).